We begin with the raw amino-acid sequence, 201 residues long: MAGAPGGGELGPAAGEPLLQRPDSGQGSPEPPAHGKPQQGFLSSLFTRDQSCPLMLQKTLDTNPYVKLLLDAMKHSGCAVNRGRHFSCEVCDGNVSGGFDASTSQIVLCENNIRNQAHMGRVVTHELIHAFDHCRAHVHWFTNIRHLACSEIRAASLSGDCSLVNELFRLRFGLKQHHQIETSCVSRPAMNSQSCLGLVSA.

Residues 1–10 are compositionally biased toward gly residues; the sequence is MAGAPGGGEL. A disordered region spans residues 1-40; sequence MAGAPGGGELGPAAGEPLLQRPDSGQGSPEPPAHGKPQQG. Residue His-125 coordinates a divalent metal cation. Glu-126 is a catalytic residue. His-129 is a binding site for a divalent metal cation.

It belongs to the peptidase M76 family. In terms of assembly, interacts with XRCC6.

This Mus musculus (Mouse) protein is Mitochondrial inner membrane protease ATP23 homolog (Atp23).